Consider the following 538-residue polypeptide: Beta-1,4-mannosyl-glycoprotein 4-beta-N-acetylglucosaminyltransferase (538 aa).

Residues 1 to 7 (MKMRRYK) lie on the Cytoplasmic side of the membrane. Residues 8 to 23 (LFLMFCMAGLCLISFL) traverse the membrane as a helical; Signal-anchor for type II membrane protein segment. Residues 24-538 (HFFKTLSYVT…VRGKLDTTEG (515 aa)) lie on the Lumenal side of the membrane. Residues 121–151 (GTRMLEKPSPGRTEEKTKVAEGSSVRGPARR) are disordered. N-linked (GlcNAc...) asparagine glycosylation is found at Asn245, Asn263, and Asn401. Residues 509–538 (PKSTVEGGRRNQGSDGRSSAVRGKLDTTEG) are disordered.

It belongs to the glycosyltransferase 17 family. In terms of assembly, interacts with MGAT4D.

Its subcellular location is the golgi apparatus membrane. The enzyme catalyses N(4)-{beta-D-GlcNAc-(1-&gt;2)-alpha-D-Man-(1-&gt;3)-[beta-D-GlcNAc-(1-&gt;2)-alpha-D-Man-(1-&gt;6)]-beta-D-Man-(1-&gt;4)-beta-D-GlcNAc-(1-&gt;4)-beta-D-GlcNAc}-L-asparaginyl-[protein] + UDP-N-acetyl-alpha-D-glucosamine = N(4)-{beta-D-GlcNAc-(1-&gt;2)-alpha-D-Man-(1-&gt;3)-[beta-D-GlcNAc-(1-&gt;4)]-[beta-D-GlcNAc-(1-&gt;2)-alpha-D-Man-(1-&gt;6)]-beta-D-Man-(1-&gt;4)-beta-D-GlcNAc-(1-&gt;4)-beta-D-GlcNAc}-L-asparaginyl-[protein] + UDP + H(+). Its pathway is protein modification; protein glycosylation. In terms of biological role, it is involved in the regulation of the biosynthesis and biological function of glycoprotein oligosaccharides. Catalyzes the addition of N-acetylglucosamine in beta 1-4 linkage to the beta-linked mannose of the trimannosyl core of N-linked sugar chains, called bisecting N-acetylglucosamine (GlcNAc). It is one of the most important enzymes involved in the regulation of the biosynthesis of glycoprotein oligosaccharides. The addition of this bisecting GlcNAc residue alters not only the composition, but also the conformation of the N-glycan. The introduction of the bisecting GlcNAc residue results in the suppression of further processing and elongation of N-glycans, precluding the formation of beta-1,6 GlcNAc branching, catalyzed by MGAT5 since it is unable to use the bisected oligosaccharide as a substrate. Addition of bisecting N-acetylglucosamine to CDH1/E-cadherin modulates CDH1 cell membrane location. Inhibits NeuAc-alpha-2,3-Gal-beta-1,4-GlcNAc- formation which modulates sialylation levels and plays a role in cell migration regulation. In brain, addition of bisecting N-acetylglucosamine to BACE1 blocks its lysosomal targeting in response to oxidative stress and further degradation which increases its location to early endosome and the APP cleavage. This is Beta-1,4-mannosyl-glycoprotein 4-beta-N-acetylglucosaminyltransferase (Mgat3) from Rattus norvegicus (Rat).